A 70-amino-acid chain; its full sequence is DNA-directed RNA polymerase subunit omega (70 aa).

The protein belongs to the RNA polymerase subunit omega family. The RNAP catalytic core consists of 2 alpha, 1 beta, 1 beta' and 1 omega subunit. When a sigma factor is associated with the core the holoenzyme is formed, which can initiate transcription.

It catalyses the reaction RNA(n) + a ribonucleoside 5'-triphosphate = RNA(n+1) + diphosphate. Promotes RNA polymerase assembly. Latches the N- and C-terminal regions of the beta' subunit thereby facilitating its interaction with the beta and alpha subunits. The protein is DNA-directed RNA polymerase subunit omega of Methylobacillus flagellatus (strain ATCC 51484 / DSM 6875 / VKM B-1610 / KT).